We begin with the raw amino-acid sequence, 138 residues long: Protein FAM136A (138 aa).

A2 is subject to N-acetylalanine. 2 positions are modified to phosphothreonine: T124 and T126.

Belongs to the FAM136 family.

The chain is Protein FAM136A (Fam136a) from Rattus norvegicus (Rat).